A 77-amino-acid polypeptide reads, in one-letter code: Apelin (77 aa).

A signal peptide spans M1–G22. Residues V23–Y41 constitute a propeptide that is removed on maturation. A disordered region spans residues R46 to F77. Over residues G58 to H71 the composition is skewed to basic residues.

It belongs to the apelin family. Post-translationally, several active peptides may be produced by proteolytic processing of the peptide precursor. In terms of tissue distribution, expressed in extraembryonic visceral endoderm and in the primitive streak at 6.5 and 7.5 dpc. Expressed in the anterior visceral yolk sac at 8.25 dpc. Expressed weakly in the embryonic heart at 11.5 dpc. Expressed in the adult heart. Expressed in endothelial cells and cardiomyocytes and weakly expressed in fibroblasts.

Its subcellular location is the secreted. The protein resides in the extracellular space. In terms of biological role, peptide hormone that functions as endogenous ligand for the G-protein-coupled apelin receptor (APLNR/APJ). Functions as a balanced agonist activating both G(i) protein pathway and beta-arrestin pathway of APLNR. Downstream G proteins activation, apelin can inhibit cAMP production and activate key intracellular effectors such as ERKs. On the other hand, APLNR activation induces beta-arrestin recruitment to the membrane leading to desensitization and internalization of the receptor. Apelin also blunts mechanical stretch-induced hypertrophic induction from APLNR. Apelin-36 dissociates more hardly than (pyroglu)apelin-13 from APLNR. Involved in the regulation of cardiac precursor cell movements during gastrulation and heart morphogenesis. Has an inhibitory effect on cytokine production in response to T-cell receptor/CD3 cross-linking; the oral intake of apelin in the colostrum and the milk might therefore modulate immune responses in neonates. Plays a role in early coronary blood vessels formation. Mediates myocardial contractility in an ERK1/2-dependent manner. May also have a role in the central control of body fluid homeostasis by influencing vasopressin release and drinking behavior. This Mus musculus (Mouse) protein is Apelin.